We begin with the raw amino-acid sequence, 701 residues long: Reverse gyrase subunit A (701 aa).

A Toprim domain is found at 41-197; it reads MVLFIVESPN…NIYRAEFHEV (157 aa). Position 47 (Glu47) interacts with Mg(2+). Residues 117–143 form an RG C-terminal-type zinc finger; the sequence is IKKCLDCGHQFVDEDKCPRCGSENIDD. Zn(2+)-binding residues include Cys120, Cys123, Cys133, and Cys136. Asp166 serves as a coordination point for Mg(2+). Residues 213-602 enclose the Topo IA-type catalytic domain; that stretch reads NTNRVKAQLV…SFKKELIEIW (390 aa). Tyr352 functions as the O-(5'-phospho-DNA)-tyrosine intermediate in the catalytic mechanism.

Belongs to the type IA topoisomerase family. As to quaternary structure, heterodimer of an RgyA and RgyB subunit. It depends on Zn(2+) as a cofactor. Mg(2+) is required as a cofactor.

The protein resides in the cytoplasm. In terms of biological role, modifies the topological state of DNA by introducing positive supercoils in an ATP-dependent process. Binds to single-stranded DNA, transiently cleaves and then rejoins the end, introducing a positive supercoil in the process. The scissile phosphodiester is attacked by the catalytic tyrosine of the enzyme, resulting in the formation of a DNA-(5'-phosphotyrosyl)-enzyme intermediate. Probably involved in rewinding DNA strands in regions of the chromosome that have opened up to allow replication, transcription, DNA repair or for DNA protection. Reconstituted holoenzyme binds dsDNA a bit better than ssDNA, this subunit preferentially binds ssDNA. In isolation this subunit relaxes negatively-supercoiled DNA, and stimulates the endogenous ATPase activity of the RgyB subunit. The protein is Reverse gyrase subunit A of Nanoarchaeum equitans (strain Kin4-M).